The primary structure comprises 119 residues: Large ribosomal subunit protein eL31y (119 aa).

Belongs to the eukaryotic ribosomal protein eL31 family.

This is Large ribosomal subunit protein eL31y (RPL31B) from Arabidopsis thaliana (Mouse-ear cress).